The chain runs to 369 residues: Homoserine O-succinyltransferase (369 aa).

One can recognise an AB hydrolase-1 domain in the interval 49–328; that stretch reads NAVFICHALT…RFDSTQSARM (280 aa). The active-site Nucleophile is the Ser-154. Position 224 (Arg-224) interacts with substrate. Active-site residues include Asp-317 and His-350. A substrate-binding site is contributed by Asp-351.

The protein belongs to the AB hydrolase superfamily. MetX family. In terms of assembly, homodimer.

It is found in the cytoplasm. It carries out the reaction L-homoserine + succinyl-CoA = O-succinyl-L-homoserine + CoA. The protein operates within amino-acid biosynthesis; L-methionine biosynthesis via de novo pathway; O-succinyl-L-homoserine from L-homoserine: step 1/1. Transfers a succinyl group from succinyl-CoA to L-homoserine, forming succinyl-L-homoserine. This is Homoserine O-succinyltransferase from Nocardioides sp. (strain ATCC BAA-499 / JS614).